A 339-amino-acid chain; its full sequence is MNEDLFYDRLHQRCPGKYLLEELETSKSNDVLHASRFVCEMELVQKTNAYYCKTIVKMLLDHEWIFAKAFTIVNDGEDEIEIYDYLYEKYIKLLSTGKPDPMMKDVVRYRFDEDVKIKIEETPNLISAASTTGFRTWEAALYMGDFLIHKPLQELAPVQGQDDGKKKLNVLEVGAGTGIVSLVILQKYHEFVNKMYVTDGDSNLVETQLKRNFELNNEVRENEPDIKLQRLWWGSDRVPEDIDLVVGADVTYDPTILPDLCECLAECLALDRCKLCLLSATIRSESTVQLFSQECNKLGLKCTIVTSTEYDANNEIRAMKALQFKPLIAPIRIYKITKQ.

Residues W137 and 174–176 each bind S-adenosyl-L-methionine; that span reads GAG. T177 bears the Phosphothreonine mark. The S-adenosyl-L-methionine site is built by D199, W233, and A248.

This sequence belongs to the class I-like SAM-binding methyltransferase superfamily. EEF2KMT family.

The protein resides in the cytoplasm. Functionally, S-adenosyl-L-methionine-dependent protein-lysine N-methyltransferase that mono-, di- and trimethylates elongation factor 2 (EFT1/EFT2) at 'Lys-509'. This chain is Protein-lysine N-methyltransferase EFM3, found in Saccharomyces cerevisiae (strain ATCC 204508 / S288c) (Baker's yeast).